We begin with the raw amino-acid sequence, 141 residues long: Large ribosomal subunit protein uL11 (141 aa).

The protein belongs to the universal ribosomal protein uL11 family. As to quaternary structure, part of the ribosomal stalk of the 50S ribosomal subunit. Interacts with L10 and the large rRNA to form the base of the stalk. L10 forms an elongated spine to which L12 dimers bind in a sequential fashion forming a multimeric L10(L12)X complex. Post-translationally, one or more lysine residues are methylated.

Forms part of the ribosomal stalk which helps the ribosome interact with GTP-bound translation factors. The chain is Large ribosomal subunit protein uL11 from Streptococcus sanguinis (strain SK36).